We begin with the raw amino-acid sequence, 118 residues long: Ribonuclease P protein component (118 aa).

Belongs to the RnpA family. Consists of a catalytic RNA component (M1 or rnpB) and a protein subunit.

It carries out the reaction Endonucleolytic cleavage of RNA, removing 5'-extranucleotides from tRNA precursor.. Functionally, RNaseP catalyzes the removal of the 5'-leader sequence from pre-tRNA to produce the mature 5'-terminus. It can also cleave other RNA substrates such as 4.5S RNA. The protein component plays an auxiliary but essential role in vivo by binding to the 5'-leader sequence and broadening the substrate specificity of the ribozyme. This Shewanella frigidimarina (strain NCIMB 400) protein is Ribonuclease P protein component.